The following is a 143-amino-acid chain: Large ribosomal subunit protein uL11 (143 aa).

The protein belongs to the universal ribosomal protein uL11 family. Part of the ribosomal stalk of the 50S ribosomal subunit. Interacts with L10 and the large rRNA to form the base of the stalk. L10 forms an elongated spine to which L12 dimers bind in a sequential fashion forming a multimeric L10(L12)X complex. In terms of processing, one or more lysine residues are methylated.

Functionally, forms part of the ribosomal stalk which helps the ribosome interact with GTP-bound translation factors. The polypeptide is Large ribosomal subunit protein uL11 (Nitrosomonas europaea (strain ATCC 19718 / CIP 103999 / KCTC 2705 / NBRC 14298)).